Consider the following 2210-residue polypeptide: Genome polyprotein (2210 aa).

Residues 1-22 (MAPVVSRDRHRHKIPKPHQPAP) form a disordered region. Residues 426–585 (SSKIMELSTI…ADFLRQHPGV (160 aa)) form the SF3 helicase domain. 456–463 (GPPGHGKS) contributes to the ATP binding site. O-(5'-phospho-RNA)-tyrosine is present on Tyr940. The Peptidase C24 domain maps to 991–1136 (GNNCEDLPLH…KVFTPITDAP (146 aa)). Catalysis depends on for 3CLpro activity residues His1025, Asp1039, and Cys1103. One can recognise a RdRp catalytic domain in the interval 1379–1501 (DHCLELDYSK…TIPSHLTKSI (123 aa)). Residues 1654–1686 (SDLIREGNMSDNKSTPEQQHESSRAMDAGATGA) form a disordered region.

Post-translationally, specific enzymatic cleavages by its own cysteine protease yield mature proteins. The protease cleaves itself from the nascent polyprotein autocatalytically. Precursor p41 can be cleaved by viral 3CLpro into protein p19 and VPg, or cleaved by host protease into protein p23/2 and protein p18. In terms of processing, VPg is uridylylated by the polymerase and is covalently attached to the 5'-end of the polyadenylated genomic and subgenomic RNAs. This uridylylated form acts as a nucleotide-peptide primer for the polymerase.

The protein resides in the virion. The protein localises to the host cytoplasm. It carries out the reaction a ribonucleoside 5'-triphosphate + H2O = a ribonucleoside 5'-diphosphate + phosphate + H(+). The enzyme catalyses Endopeptidase with a preference for cleavage when the P1 position is occupied by Glu-|-Xaa and the P1' position is occupied by Gly-|-Yaa.. It catalyses the reaction RNA(n) + a ribonucleoside 5'-triphosphate = RNA(n+1) + diphosphate. Its function is as follows. Displays NTPase activity, but no helicase activity. Induces the formation of convoluted membranes derived from the host ER. These remodeled membranes probably form the viral factories that contain the replication complex. Together with NS2 and NS4, initiates the formation of the replication complex. In terms of biological role, viral genome-linked protein is covalently linked to the 5'-end of the positive-strand, negative-strand genomic RNAs and subgenomic RNA. Acts as a genome-linked replication primer. May recruit ribosome to viral RNA thereby promoting viral proteins translation. Interacts with host translation initiation complex to allow the translation of viral proteins. Processes the polyprotein. 3CLpro-RdRp is first released by autocleavage, then all other proteins are cleaved. May cleave polyadenylate-binding protein thereby inhibiting cellular translation. Functionally, replicates genomic and antigenomic RNA by recognizing replications specific signals. Also transcribes a subgenomic mRNA by initiating RNA synthesis internally on antigenomic RNA. This sgRNA codes for structural proteins. Catalyzes the covalent attachment VPg with viral RNAs. Its function is as follows. Capsid protein self assembles to form an icosahedral capsid with a T=3 symmetry, about 35 nm in diameter, and consisting of 180 capsid proteins. A smaller form of capsid with a diameter of 23 nm might be capsid proteins assembled as icosahedron with T=1 symmetry. The capsid encapsulate VP2 proteins and genomic or subgenomic RNA. Attaches virion to target cells by binding histo-blood group antigens, inducing endocytosis of the viral particle. Acidification of the endosome induces conformational change of capsid protein thereby injecting virus genomic RNA into host cytoplasm. The chain is Genome polyprotein from Bos taurus (Bovine).